We begin with the raw amino-acid sequence, 89 residues long: Small ribosomal subunit protein bS20 (89 aa).

The interval 1–28 (MANHYSALKRARQTETRTARNRANTSRM) is disordered.

It belongs to the bacterial ribosomal protein bS20 family.

Its function is as follows. Binds directly to 16S ribosomal RNA. The protein is Small ribosomal subunit protein bS20 of Koribacter versatilis (strain Ellin345).